A 397-amino-acid polypeptide reads, in one-letter code: Citrate synthase (397 aa).

Active-site residues include histidine 266 and aspartate 320.

Belongs to the citrate synthase family.

The catalysed reaction is oxaloacetate + acetyl-CoA + H2O = citrate + CoA + H(+). Its pathway is carbohydrate metabolism; tricarboxylic acid cycle; isocitrate from oxaloacetate: step 1/2. This chain is Citrate synthase (gltA), found in Synechocystis sp. (strain ATCC 27184 / PCC 6803 / Kazusa).